The following is a 178-amino-acid chain: ATP synthase subunit delta (178 aa).

This sequence belongs to the ATPase delta chain family. F-type ATPases have 2 components, F(1) - the catalytic core - and F(0) - the membrane proton channel. F(1) has five subunits: alpha(3), beta(3), gamma(1), delta(1), epsilon(1). F(0) has three main subunits: a(1), b(2) and c(10-14). The alpha and beta chains form an alternating ring which encloses part of the gamma chain. F(1) is attached to F(0) by a central stalk formed by the gamma and epsilon chains, while a peripheral stalk is formed by the delta and b chains.

It is found in the cell membrane. Functionally, f(1)F(0) ATP synthase produces ATP from ADP in the presence of a proton or sodium gradient. F-type ATPases consist of two structural domains, F(1) containing the extramembraneous catalytic core and F(0) containing the membrane proton channel, linked together by a central stalk and a peripheral stalk. During catalysis, ATP synthesis in the catalytic domain of F(1) is coupled via a rotary mechanism of the central stalk subunits to proton translocation. In terms of biological role, this protein is part of the stalk that links CF(0) to CF(1). It either transmits conformational changes from CF(0) to CF(1) or is implicated in proton conduction. This chain is ATP synthase subunit delta, found in Desulfitobacterium hafniense (strain DSM 10664 / DCB-2).